The chain runs to 544 residues: L-aspartate oxidase (544 aa).

FAD contacts are provided by residues 17–20 (SGGA), Lys-39, 46–53 (STFYAQGG), and Asp-221. The active-site Proton donor/acceptor is the Arg-288. FAD contacts are provided by residues Glu-373 and 389–390 (SL).

It belongs to the FAD-dependent oxidoreductase 2 family. NadB subfamily. FAD is required as a cofactor.

The protein localises to the cytoplasm. It carries out the reaction L-aspartate + O2 = iminosuccinate + H2O2. It participates in cofactor biosynthesis; NAD(+) biosynthesis; iminoaspartate from L-aspartate (oxidase route): step 1/1. Catalyzes the oxidation of L-aspartate to iminoaspartate, the first step in the de novo biosynthesis of NAD(+). This chain is L-aspartate oxidase, found in Acinetobacter baylyi (strain ATCC 33305 / BD413 / ADP1).